Consider the following 464-residue polypeptide: 3-deoxy-D-manno-octulosonic acid transferase (464 aa).

The helical; Signal-anchor transmembrane segment at 2–22 threads the bilayer; that stretch reads MLLYYALSFILLPVYFIIILI. The region spanning 47–93 is the RPE1 insert domain; that stretch reads DSLDFMQTSANKEEFKGDTSLRTTTYTLIREDEGLGSTYKLPLEASD. Catalysis depends on Glu-107, which acts as the Proton acceptor. CMP contacts are provided by residues 311 to 312, 352 to 354, and 377 to 380; these read PR, FGE, and NILE.

The protein belongs to the glycosyltransferase group 1 family. Glycosyltransferase 30 subfamily.

It localises to the cell inner membrane. It carries out the reaction lipid IVA (E. coli) + CMP-3-deoxy-beta-D-manno-octulosonate = alpha-Kdo-(2-&gt;6)-lipid IVA (E. coli) + CMP + H(+). It participates in bacterial outer membrane biogenesis; LPS core biosynthesis. Functionally, involved in lipopolysaccharide (LPS) biosynthesis. Catalyzes the transfer of 3-deoxy-D-manno-octulosonate (Kdo) residue(s) from CMP-Kdo to lipid IV(A), the tetraacyldisaccharide-1,4'-bisphosphate precursor of lipid A. This chain is 3-deoxy-D-manno-octulosonic acid transferase (waaA), found in Rickettsia conorii (strain ATCC VR-613 / Malish 7).